Consider the following 456-residue polypeptide: Argininosuccinate lyase (456 aa).

This sequence belongs to the lyase 1 family. Argininosuccinate lyase subfamily.

It is found in the cytoplasm. It carries out the reaction 2-(N(omega)-L-arginino)succinate = fumarate + L-arginine. Its pathway is amino-acid biosynthesis; L-arginine biosynthesis; L-arginine from L-ornithine and carbamoyl phosphate: step 3/3. The chain is Argininosuccinate lyase from Shewanella amazonensis (strain ATCC BAA-1098 / SB2B).